We begin with the raw amino-acid sequence, 271 residues long: Thiazole synthase (271 aa).

Catalysis depends on lysine 108, which acts as the Schiff-base intermediate with DXP. Residues glycine 169, 195–196 (AG), and 217–218 (NS) each bind 1-deoxy-D-xylulose 5-phosphate.

This sequence belongs to the ThiG family. Homotetramer. Forms heterodimers with either ThiH or ThiS.

Its subcellular location is the cytoplasm. The enzyme catalyses [ThiS sulfur-carrier protein]-C-terminal-Gly-aminoethanethioate + 2-iminoacetate + 1-deoxy-D-xylulose 5-phosphate = [ThiS sulfur-carrier protein]-C-terminal Gly-Gly + 2-[(2R,5Z)-2-carboxy-4-methylthiazol-5(2H)-ylidene]ethyl phosphate + 2 H2O + H(+). It functions in the pathway cofactor biosynthesis; thiamine diphosphate biosynthesis. Functionally, catalyzes the rearrangement of 1-deoxy-D-xylulose 5-phosphate (DXP) to produce the thiazole phosphate moiety of thiamine. Sulfur is provided by the thiocarboxylate moiety of the carrier protein ThiS. In vitro, sulfur can be provided by H(2)S. The sequence is that of Thiazole synthase from Prochlorococcus marinus (strain SARG / CCMP1375 / SS120).